The sequence spans 64 residues: Large ribosomal subunit protein uL29 (64 aa).

The protein belongs to the universal ribosomal protein uL29 family.

This is Large ribosomal subunit protein uL29 from Porphyromonas gingivalis (strain ATCC 33277 / DSM 20709 / CIP 103683 / JCM 12257 / NCTC 11834 / 2561).